Here is a 101-residue protein sequence, read N- to C-terminus: Small ribosomal subunit protein uS10 (101 aa).

This sequence belongs to the universal ribosomal protein uS10 family. Part of the 30S ribosomal subunit.

Involved in the binding of tRNA to the ribosomes. The chain is Small ribosomal subunit protein uS10 from Mycobacterium leprae (strain Br4923).